The sequence spans 298 residues: N-acetylmuramic acid 6-phosphate etherase (298 aa).

One can recognise an SIS domain in the interval 55-218; it reads IHAQVSGGGR…STGLMIKSGK (164 aa). E83 (proton donor) is an active-site residue. Residue E114 is part of the active site.

Belongs to the GCKR-like family. MurNAc-6-P etherase subfamily. As to quaternary structure, homodimer.

It catalyses the reaction N-acetyl-D-muramate 6-phosphate + H2O = N-acetyl-D-glucosamine 6-phosphate + (R)-lactate. It functions in the pathway amino-sugar metabolism; 1,6-anhydro-N-acetylmuramate degradation. Its pathway is amino-sugar metabolism; N-acetylmuramate degradation. The protein operates within cell wall biogenesis; peptidoglycan recycling. Functionally, specifically catalyzes the cleavage of the D-lactyl ether substituent of MurNAc 6-phosphate, producing GlcNAc 6-phosphate and D-lactate. Together with AnmK, is also required for the utilization of anhydro-N-acetylmuramic acid (anhMurNAc) either imported from the medium or derived from its own cell wall murein, and thus plays a role in cell wall recycling. This is N-acetylmuramic acid 6-phosphate etherase from Shigella boydii serotype 18 (strain CDC 3083-94 / BS512).